The primary structure comprises 205 residues: Ribonuclease HII (205 aa).

Residues 13-205 (TIVAGVDEVG…APVKYMLSMC (193 aa)) enclose the RNase H type-2 domain. A divalent metal cation is bound by residues Asp19, Glu20, and Asp114.

This sequence belongs to the RNase HII family. Mn(2+) serves as cofactor. It depends on Mg(2+) as a cofactor.

The protein localises to the cytoplasm. The enzyme catalyses Endonucleolytic cleavage to 5'-phosphomonoester.. Its function is as follows. Endonuclease that specifically degrades the RNA of RNA-DNA hybrids. The protein is Ribonuclease HII of Blochmanniella floridana.